The following is a 65-amino-acid chain: Large ribosomal subunit protein bL35 (65 aa).

Belongs to the bacterial ribosomal protein bL35 family.

The protein is Large ribosomal subunit protein bL35 of Phytoplasma australiense.